Reading from the N-terminus, the 430-residue chain is UDP-N-acetylglucosamine 1-carboxyvinyltransferase (430 aa).

Residue 22–23 (KN) participates in phosphoenolpyruvate binding. Residue Arg-102 coordinates UDP-N-acetyl-alpha-D-glucosamine. Residue Cys-126 is the Proton donor of the active site. Cys-126 is subject to 2-(S-cysteinyl)pyruvic acid O-phosphothioketal. UDP-N-acetyl-alpha-D-glucosamine-binding positions include 131–135 (RPVDL), 172–175 (KVSV), Asp-317, and Ile-339.

It belongs to the EPSP synthase family. MurA subfamily.

The protein resides in the cytoplasm. It catalyses the reaction phosphoenolpyruvate + UDP-N-acetyl-alpha-D-glucosamine = UDP-N-acetyl-3-O-(1-carboxyvinyl)-alpha-D-glucosamine + phosphate. It functions in the pathway cell wall biogenesis; peptidoglycan biosynthesis. In terms of biological role, cell wall formation. Adds enolpyruvyl to UDP-N-acetylglucosamine. The protein is UDP-N-acetylglucosamine 1-carboxyvinyltransferase of Sinorhizobium fredii (strain NBRC 101917 / NGR234).